The following is a 307-amino-acid chain: Methionyl-tRNA formyltransferase (307 aa).

Position 108–111 (108–111 (SLLP)) interacts with (6S)-5,6,7,8-tetrahydrofolate.

This sequence belongs to the Fmt family.

It catalyses the reaction L-methionyl-tRNA(fMet) + (6R)-10-formyltetrahydrofolate = N-formyl-L-methionyl-tRNA(fMet) + (6S)-5,6,7,8-tetrahydrofolate + H(+). In terms of biological role, attaches a formyl group to the free amino group of methionyl-tRNA(fMet). The formyl group appears to play a dual role in the initiator identity of N-formylmethionyl-tRNA by promoting its recognition by IF2 and preventing the misappropriation of this tRNA by the elongation apparatus. This Xylella fastidiosa (strain M12) protein is Methionyl-tRNA formyltransferase.